We begin with the raw amino-acid sequence, 161 residues long: Transcriptional repressor NrdR (161 aa).

The disordered stretch occupies residues 1–23 (MRCPFCGHPDTQVKDSRPAEDGN). A zinc finger spans residues 3 to 34 (CPFCGHPDTQVKDSRPAEDGNAIRRRRQCPSC). The segment covering 11–23 (TQVKDSRPAEDGN) has biased composition (basic and acidic residues). Positions 49–139 (LTVMKKSGRR…VYKDFHKVED (91 aa)) constitute an ATP-cone domain.

The protein belongs to the NrdR family. The cofactor is Zn(2+).

Functionally, negatively regulates transcription of bacterial ribonucleotide reductase nrd genes and operons by binding to NrdR-boxes. The chain is Transcriptional repressor NrdR from Maricaulis maris (strain MCS10) (Caulobacter maris).